We begin with the raw amino-acid sequence, 423 residues long: Testin (423 aa).

Disordered stretches follow at residues 1-21 (MSATHPTRLGTRTKESNACAS) and 138-169 (EKQPVAGSEGAQYRKKQLAKQLPAHDQDPSKC). Residues 97–204 (MILTNPVAAK…GDVKFPSEMN (108 aa)) enclose the PET domain. Over residues 160 to 169 (PAHDQDPSKC) the composition is skewed to basic and acidic residues. LIM zinc-binding domains lie at 236-299 (YSCY…CDSE), 301-361 (PRCA…NHAV), and 364-423 (QGCH…RMMS).

The protein belongs to the prickle / espinas / testin family. Interacts via LIM domain 1 with ZYX. Interacts (via LIM domain 3) with ENAH and VASP. Interacts with ALKBH4, talin, actin, alpha-actinin, GRIP1 and PXN. Interacts (via LIM domain 2) with ACTL7A (via N-terminus). Heterodimer with ACTL7A; the heterodimer interacts with ENAH to form a heterotrimer. Detected at the acrosome of round spermatids (at protein level). Isoform TES1 transcript is highly expressed in adult testis and detected at low levels in other tissues. Isoform TES2 transcript is highly expressed in testis, kidney and spleen; intermediate in thymus, submaxillary gland and lung; detected at low levels in other tissues.

It localises to the cytoplasm. It is found in the cell junction. Its subcellular location is the focal adhesion. Functionally, scaffold protein that may play a role in cell adhesion, cell spreading and in the reorganization of the actin cytoskeleton. Plays a role in the regulation of cell proliferation. May act as a tumor suppressor. This Mus musculus (Mouse) protein is Testin (Tes).